The sequence spans 133 residues: Small ribosomal subunit protein uS8 (133 aa).

It belongs to the universal ribosomal protein uS8 family. In terms of assembly, part of the 30S ribosomal subunit. Contacts proteins S5 and S12.

One of the primary rRNA binding proteins, it binds directly to 16S rRNA central domain where it helps coordinate assembly of the platform of the 30S subunit. The polypeptide is Small ribosomal subunit protein uS8 (Chlorobaculum parvum (strain DSM 263 / NCIMB 8327) (Chlorobium vibrioforme subsp. thiosulfatophilum)).